A 252-amino-acid polypeptide reads, in one-letter code: Imidazole glycerol phosphate synthase subunit HisF (252 aa).

Catalysis depends on residues Asp11 and Asp130.

It belongs to the HisA/HisF family. Heterodimer of HisH and HisF.

Its subcellular location is the cytoplasm. The catalysed reaction is 5-[(5-phospho-1-deoxy-D-ribulos-1-ylimino)methylamino]-1-(5-phospho-beta-D-ribosyl)imidazole-4-carboxamide + L-glutamine = D-erythro-1-(imidazol-4-yl)glycerol 3-phosphate + 5-amino-1-(5-phospho-beta-D-ribosyl)imidazole-4-carboxamide + L-glutamate + H(+). The protein operates within amino-acid biosynthesis; L-histidine biosynthesis; L-histidine from 5-phospho-alpha-D-ribose 1-diphosphate: step 5/9. Functionally, IGPS catalyzes the conversion of PRFAR and glutamine to IGP, AICAR and glutamate. The HisF subunit catalyzes the cyclization activity that produces IGP and AICAR from PRFAR using the ammonia provided by the HisH subunit. This Syntrophomonas wolfei subsp. wolfei (strain DSM 2245B / Goettingen) protein is Imidazole glycerol phosphate synthase subunit HisF.